Reading from the N-terminus, the 212-residue chain is Proheparin-binding EGF-like growth factor (212 aa).

Residues 1 to 18 form the signal peptide; sequence MDGRVVLIHALLTAVCSA. Residues 19–167 are Extracellular-facing; the sequence is AVGKFGRDGP…PSTYDHTTAL (149 aa). The disordered stretch occupies residues 82-108; that stretch reads SKPQGPVTPKKKGNGNKRRKGKGLGKK. Basic residues predominate over residues 90 to 106; that stretch reads PKKKGNGNKRRKGKGLG. Residues 108-148 enclose the EGF-like domain; sequence KRDPCLRKYKDFCIHGECKYIRELGAPSCICQPGYHGERCH. Disulfide bonds link C112–C125, C120–C136, and C138–C147. Residues 153-212 constitute a propeptide, C-terminal; it reads PVEHPPSTYDHTTALAVVAVVLSSLCLVIITALLMFRCHKRGVYDVENEEKIKLGITVNH. The chain crosses the membrane as a helical span at residues 168-188; it reads AVVAVVLSSLCLVIITALLMF. The Cytoplasmic portion of the chain corresponds to 189 to 212; it reads RCHKRGVYDVENEEKIKLGITVNH.

In terms of assembly, interacts with CNIH2.

It localises to the secreted. The protein resides in the extracellular space. Its subcellular location is the cell membrane. Its function is as follows. May be involved in macrophage-mediated cellular proliferation. It is mitogenic for fibroblasts and smooth muscle but not endothelial cells. It is able to bind EGF receptor/EGFR with higher affinity than EGF itself and is a far more potent mitogen for smooth muscle cells than EGF. Plays an important role in the proper development of cranial nerves by inhibiting the migration of the cranial neural crest cells (NCCs) into the odd-numbered neuromeres (r3 and r5) of the hindbrain Plays a role in mediating v-Jun-induced oncogenic transformation. The protein is Proheparin-binding EGF-like growth factor (HBEGF) of Gallus gallus (Chicken).